The primary structure comprises 411 residues: Argininosuccinate synthase (411 aa).

ATP-binding positions include 13–21 (AYSGGLDTS) and Ala-40. L-citrulline contacts are provided by Tyr-91 and Ser-96. Gly-121 contacts ATP. Residues Thr-123, Asn-127, and Asp-128 each contribute to the L-aspartate site. Asn-127 contacts L-citrulline. Residues Arg-131, Ser-182, Ser-191, Glu-267, and Tyr-279 each coordinate L-citrulline.

The protein belongs to the argininosuccinate synthase family. Type 1 subfamily. Homotetramer.

It is found in the cytoplasm. It carries out the reaction L-citrulline + L-aspartate + ATP = 2-(N(omega)-L-arginino)succinate + AMP + diphosphate + H(+). It participates in amino-acid biosynthesis; L-arginine biosynthesis; L-arginine from L-ornithine and carbamoyl phosphate: step 2/3. In Bartonella tribocorum (strain CIP 105476 / IBS 506), this protein is Argininosuccinate synthase.